A 524-amino-acid chain; its full sequence is Protein hunchback (524 aa).

2 disordered regions span residues I42 to Q86 and Y101 to S187. Over residues S59–D75 the composition is skewed to low complexity. Residues L76–Q86 are compositionally biased toward polar residues. 3 stretches are compositionally biased toward basic and acidic residues: residues K118–E127, R138–L154, and T164–N178. 4 C2H2-type zinc fingers span residues F202–H224, L231–H253, F259–H281, and Y298–H311. The tract at residues D402–T442 is disordered. 2 C2H2-type zinc fingers span residues N471 to H493 and F499 to H523.

The protein belongs to the hunchback C2H2-type zinc-finger protein family.

The protein localises to the nucleus. In terms of biological role, gap class segmentation protein that controls development of head structures. The protein is Protein hunchback (hb) of Tribolium castaneum (Red flour beetle).